The chain runs to 535 residues: MALAFDEFGRPFIILREQDQKTRLRGIDAQKANIAAGKAVARILRSSLGPKGMDKMLQGPDGDITITNDGATILEQMDVDNQIAKLMVELSRSQDYEIGDGTTGVVVMAGALLEQAERQLDRGIHPIRIAEGYEMASRVAVEHLERIAQKFEFDVNNYEPLVQTCMTTLSSKIVNRCKRSLAEIAVKAVLAVADLERRDVNLDLIKVEGKVGGKLEDTELIYGILIDKDMSHPQMPKQIEDAHIAILTCPFEPPKPKTKHKVDIDTVEKFETLRKQEQQYFDEMVQKCKDVGATLVICQWGFDDEANHLLMHRNLPAVRWVGGVELELIAIATGGRIVPRFQELTPEKLGKAGVVREKSFGTTKERMLYIEHCANSKAVTVFIRGGNKMMIEETKRSIHDALCVARNLIRNKSIVYGGGAAEIACSLAVDAAADKYPGVEQYAIRAFAEALDSVPMALAENSGLQPIETLSAVKSQQIKENIPFYGIDCNDVGTNDMREQNVFETLIGKQQQILLATQVVKMILKIDDVISNSEY.

The protein belongs to the TCP-1 chaperonin family. Heterooligomeric complex of about 850 to 900 kDa that forms two stacked rings, 12 to 16 nm in diameter.

It localises to the cytoplasm. Functionally, molecular chaperone; assists the folding of proteins upon ATP hydrolysis. Known to play a role, in vitro, in the folding of actin and tubulin. In Arabidopsis thaliana (Mouse-ear cress), this protein is T-complex protein 1 subunit epsilon.